The chain runs to 235 residues: Segregation and condensation protein A (235 aa).

The protein belongs to the ScpA family. Component of a cohesin-like complex composed of ScpA, ScpB and the Smc homodimer, in which ScpA and ScpB bind to the head domain of Smc. The presence of the three proteins is required for the association of the complex with DNA.

It is found in the cytoplasm. Functionally, participates in chromosomal partition during cell division. May act via the formation of a condensin-like complex containing Smc and ScpB that pull DNA away from mid-cell into both cell halves. This chain is Segregation and condensation protein A, found in Streptococcus equi subsp. zooepidemicus (strain MGCS10565).